A 340-amino-acid polypeptide reads, in one-letter code: Conidiation-specific protein 13 (340 aa).

Residues 313 to 340 (AEAAAGISSGKPAADRKTKGKKGTKFRV) are disordered. The segment covering 330–340 (TKGKKGTKFRV) has biased composition (basic residues).

This Neurospora crassa (strain ATCC 24698 / 74-OR23-1A / CBS 708.71 / DSM 1257 / FGSC 987) protein is Conidiation-specific protein 13 (con-13).